The chain runs to 643 residues: Enzymatic polyprotein (643 aa).

The 204-residue stretch at 6–209 (NPNATFITVK…KEVNVPNNIP (204 aa)) folds into the Peptidase A3A domain. Asp26 functions as the For protease activity in the catalytic mechanism. The 185-residue stretch at 226-410 (VRKGIIEESK…QTIDFLGLTL (185 aa)) folds into the Reverse transcriptase domain. The Mg(2+) site is built by Asp296, Asp360, and Asp361.

Belongs to the caulimoviridae enzymatic polyprotein family.

The catalysed reaction is DNA(n) + a 2'-deoxyribonucleoside 5'-triphosphate = DNA(n+1) + diphosphate. In terms of biological role, encodes for at least two polypeptides: protease (PR) and reverse transcriptase (RT). The protease processes the polyprotein in cis. Reverse transcriptase is multifunctional enzyme that converts the viral RNA genome into dsDNA in viral cytoplasmic capsids. This enzyme displays a DNA polymerase activity that can copy either DNA or RNA templates, and a ribonuclease H (RNase H) activity that cleaves the RNA strand of RNA-DNA heteroduplexes in a partially processive 3'- to 5'-endonucleasic mode. Neo-synthesized pregenomic RNA (pgRNA) are encapsidated, and reverse-transcribed inside the nucleocapsid. Partial (+)DNA is synthesized from the (-)DNA template and generates the relaxed circular DNA (RC-DNA) genome. After budding and infection, the RC-DNA migrates in the nucleus, and is converted into a plasmid-like covalently closed circular DNA (cccDNA). The chain is Enzymatic polyprotein from Cestrum parqui (CmYLCV).